Reading from the N-terminus, the 404-residue chain is Cysteine desulfurase IscS (404 aa).

Pyridoxal 5'-phosphate-binding positions include Ala75–Thr76, Asn155, Gln183, and Ser203–His205. An N6-(pyridoxal phosphate)lysine modification is found at Lys206. Pyridoxal 5'-phosphate is bound at residue Thr243. Cys328 acts as the Cysteine persulfide intermediate in catalysis. Cys328 contributes to the [2Fe-2S] cluster binding site.

Belongs to the class-V pyridoxal-phosphate-dependent aminotransferase family. NifS/IscS subfamily. Homodimer. Forms a heterotetramer with IscU, interacts with other sulfur acceptors. It depends on pyridoxal 5'-phosphate as a cofactor.

It is found in the cytoplasm. The enzyme catalyses (sulfur carrier)-H + L-cysteine = (sulfur carrier)-SH + L-alanine. It participates in cofactor biosynthesis; iron-sulfur cluster biosynthesis. Master enzyme that delivers sulfur to a number of partners involved in Fe-S cluster assembly, tRNA modification or cofactor biosynthesis. Catalyzes the removal of elemental sulfur atoms from cysteine to produce alanine. Functions as a sulfur delivery protein for Fe-S cluster synthesis onto IscU, an Fe-S scaffold assembly protein, as well as other S acceptor proteins. This Pseudomonas syringae pv. syringae (strain B728a) protein is Cysteine desulfurase IscS.